Consider the following 774-residue polypeptide: 5-methyltetrahydropteroyltriglutamate--homocysteine methyltransferase (774 aa).

5-methyltetrahydropteroyltri-L-glutamate-binding positions include 15 to 18 (RELK) and Lys-116. L-homocysteine is bound by residues 445-447 (IGS) and Glu-498. L-methionine is bound by residues 445-447 (IGS) and Glu-498. 5-methyltetrahydropteroyltri-L-glutamate is bound by residues 529–530 (RC) and Trp-575. Asp-613 is a binding site for L-homocysteine. Asp-613 contributes to the L-methionine binding site. Glu-619 contributes to the 5-methyltetrahydropteroyltri-L-glutamate binding site. Residues His-655, Cys-657, and Glu-679 each coordinate Zn(2+). His-708 (proton donor) is an active-site residue. A Zn(2+)-binding site is contributed by Cys-740.

The protein belongs to the vitamin-B12 independent methionine synthase family. Zn(2+) is required as a cofactor.

It carries out the reaction 5-methyltetrahydropteroyltri-L-glutamate + L-homocysteine = tetrahydropteroyltri-L-glutamate + L-methionine. The protein operates within amino-acid biosynthesis; L-methionine biosynthesis via de novo pathway; L-methionine from L-homocysteine (MetE route): step 1/1. Its function is as follows. Catalyzes the transfer of a methyl group from 5-methyltetrahydrofolate to homocysteine resulting in methionine formation. The polypeptide is 5-methyltetrahydropteroyltriglutamate--homocysteine methyltransferase (Flavobacterium johnsoniae (strain ATCC 17061 / DSM 2064 / JCM 8514 / BCRC 14874 / CCUG 350202 / NBRC 14942 / NCIMB 11054 / UW101) (Cytophaga johnsonae)).